The chain runs to 432 residues: Adhesin YadA (432 aa).

The signal sequence occupies residues 1-25; sequence MTKDFKISVSAALISALFSSPYAFA. The tract at residues 26 to 340 is surface exposed passenger domain; sequence EEPEDGNDGI…KKAISESNQY (315 aa). Positions 242–263 form a coiled coil; it reads VNVAQLKKEMAETLENARKETL. An outer membrane translocation of the passenger domain region spans residues 341–379; that stretch reads TDHKFSQLDNRLDKLDKRVDKGLASSAALNSLFQPYGVG. 4 beta stranded membrane-spanning segments follow: residues 379-389, 393-404, 411-417, and 421-432; these read GKVNFTAGVGG, SQALAIGSGYRV, KAGVAYA, and NVMYNASFNIEW. The tract at residues 380 to 432 is translocator domain; that stretch reads KVNFTAGVGGYRSSQALAIGSGYRVNESVALKAGVAYAGSSNVMYNASFNIEW.

This sequence belongs to the autotransporter-2 (AT-2) (TC 1.B.40) family. Homotrimer.

The protein localises to the cell surface. Its subcellular location is the cell outer membrane. Collagen-binding outer membrane protein forming a fibrillar matrix on the bacterial cell surface. Promotes attachment to eukaryotic cells and after invasion, is the major adhesin in infected tissue. Constitutes an alternative uptake pathway under conditions in which invasin synthesis is repressed. This is Adhesin YadA (yadA) from Yersinia pseudotuberculosis serotype I (strain IP32953).